A 161-amino-acid chain; its full sequence is Phosphopantetheine adenylyltransferase (161 aa).

Threonine 10 lines the substrate pocket. Residues 10–11 and histidine 18 each bind ATP; that span reads TF. Positions 42, 74, and 88 each coordinate substrate. ATP is bound by residues 89-91, glutamate 99, and 124-130; these read GLR and WSFISSS.

It belongs to the bacterial CoaD family. As to quaternary structure, homohexamer. Mg(2+) serves as cofactor.

It localises to the cytoplasm. The enzyme catalyses (R)-4'-phosphopantetheine + ATP + H(+) = 3'-dephospho-CoA + diphosphate. It functions in the pathway cofactor biosynthesis; coenzyme A biosynthesis; CoA from (R)-pantothenate: step 4/5. Functionally, reversibly transfers an adenylyl group from ATP to 4'-phosphopantetheine, yielding dephospho-CoA (dPCoA) and pyrophosphate. The chain is Phosphopantetheine adenylyltransferase from Edwardsiella ictaluri (strain 93-146).